Here is a 187-residue protein sequence, read N- to C-terminus: ECF RNA polymerase sigma factor SigW (187 aa).

The tract at residues 3 to 95 (MMIKKRIKQV…RKKKPDYYLD (93 aa)) is sigma-70 factor domain-2. The Polymerase core binding motif lies at 47–50 (DIAQ). Residues 125–187 (ELSNTIQQKI…EALRKQLRDL (63 aa)) form a sigma-70 factor domain-4 region. A DNA-binding region (H-T-H motif) is located at residues 166 to 184 (VGTVKTRIHRGREALRKQL).

Belongs to the sigma-70 factor family. ECF subfamily. Interacts transiently with the RNA polymerase catalytic core formed by RpoA, RpoB, RpoC and RpoZ (2 alpha, 1 beta, 1 beta' and 1 omega subunit) to form the RNA polymerase holoenzyme that can initiate transcription. Forms a heterodimer with cognate anti-sigma factor RsiW, which prevents it from binding to the -10 and -35 promoter elements.

Extracytoplasmic function (ECF) sigma factors are held in an inactive form by a cognate anti-sigma factor (RsiW for this protein) until released by regulated membrane proteolysis (RIP). RIP occurs when an extracytoplasmic signal (envelope stress) triggers a concerted proteolytic cascade to transmit information and elicit cellular responses. The anti-sigma factor RsiW is a membrane protein, binding sigma-W in the cytoplasm. RsiW is first cut extracytoplasmically (site-1 protease, S1P, by PrsW), then within the membrane itself (site-2 protease, S2P, by RasP), while cytoplasmic proteases (predominantly ClpX-ClpP) finish degrading the regulatory protein, liberating sigma-W. In terms of biological role, sigma factors are initiation factors that promote the attachment of RNA polymerase (RNAP) to specific initiation sites and are then released. Sigma-W controls genes involved in response to cell envelope stress such as antimicrobial peptides, alkaline pH, transport processes and detoxification. In Bacillus subtilis (strain 168), this protein is ECF RNA polymerase sigma factor SigW (sigW).